The primary structure comprises 1636 residues: Tyrosine-protein phosphatase non-receptor type 23 (1636 aa).

The BRO1 domain occupies 8–394 (PMIWLDLKEA…AKIEDKNEVL (387 aa)). 2 TPR repeats span residues 250–283 (AVAH…LNEA) and 374–407 (EEKA…DPET). Residues 550–623 (KAVLQNLKRI…VYLEQNLAAQ (74 aa)) adopt a coiled-coil conformation. Positions 701-714 (EAARQQLLDRELKK) are enriched in basic and acidic residues. Disordered stretches follow at residues 701–812 (EAAR…GPHA) and 888–1151 (QAPI…AAEG). Phosphoserine is present on Ser-733. The his stretch occupies residues 770–1130 (HFPPSPFPSS…SSSPESQHGG (361 aa)). Pro residues-rich tracts occupy residues 898-922 (RPNP…PTPY) and 950-962 (RIGP…PQPH). Arg-950 is modified (omega-N-methylarginine). A run of 6 repeats spans residues 953-954 (PQ), 955-956 (PQ), 957-958 (PH), 959-960 (PQ), 961-962 (PH), and 963-964 (PS). Residues 953–964 (PQPQPHPQPHPS) are 6 X 2 AA approximate tandem repeats of P-Q. Pro residues-rich tracts occupy residues 983-1002 (LFPP…PYAP), 1036-1050 (FPSP…PPLA), and 1083-1109 (HLVP…PPPC). A compositionally biased stretch (polar residues) spans 1120–1131 (LSSSPESQHGGT). 2 positions are modified to phosphoserine: Ser-1122 and Ser-1123. Thr-1131 is subject to Phosphothreonine. In terms of domain architecture, Tyrosine-protein phosphatase spans 1192–1452 (DTVWRELQDA…RFCYEAVVRH (261 aa)). The active-site Phosphocysteine intermediate is Cys-1392. The segment at 1513–1636 (LESPVASLPG…LDPLWTLNKT (124 aa)) is disordered. 2 stretches are compositionally biased toward pro residues: residues 1523–1533 (PAEPPGLPPAS) and 1542–1556 (SSSP…PEAP). Residues 1567-1587 (APSSGPPSSSLELLASLTPEA) show a composition bias toward low complexity. Omega-N-methylarginine is present on Arg-1615.

It belongs to the protein-tyrosine phosphatase family. Non-receptor class subfamily. In terms of assembly, interacts with GRAP2 and GRB2. Interacts with UBAP1. Interacts with CHMP4B.

It is found in the nucleus. Its subcellular location is the cytoplasm. The protein resides in the cytoplasmic vesicle. The protein localises to the endosome. It localises to the cytoskeleton. It is found in the cilium basal body. Its subcellular location is the early endosome. The catalysed reaction is O-phospho-L-tyrosyl-[protein] + H2O = L-tyrosyl-[protein] + phosphate. In terms of biological role, plays a role in sorting of endocytic ubiquitinated cargos into multivesicular bodies (MVBs) via its interaction with the ESCRT-I complex (endosomal sorting complex required for transport I), and possibly also other ESCRT complexes. May act as a negative regulator of Ras-mediated mitogenic activity. Plays a role in ciliogenesis. The chain is Tyrosine-protein phosphatase non-receptor type 23 (PTPN23) from Homo sapiens (Human).